Consider the following 516-residue polypeptide: MTDIHNHKILILDFGSQYTQLIARRVREVGVFCEIFPHDVAADFIKNYQAKGIILSGGPESVYDSDVKAPEIVFELGVPVLGICYGMQTMVMQHGGEVKGADQSEFGKAIINILNLTNNIFSNMEHEQLVWMSHSDKVTQTGEHFEIIASSTNAPVAAVAHKNKPFFGVQFHPETTHTENGKQIIENFVVNICGCDTLWNIENIIENDIKEIKQKVGTDKVILGLSGGVDSSVVAAILHQAIGDQLTCIFVDTGLLRLNEGDQVMQVFAEHMDINVIRINAKNRFLDALRGICDPEQKRKIIGKLFVDIFDEEAAKIENAKWLAQGTIYSDVIESAGNNQSKAHVIKSHHNVGGLPKEMKLKLLEPLRELFKDEVRKLGLGLGLPYNMLYRHPFPGPGLGVRILGEIKKEYVETLQKADAIFTEELYKHNLYHDVSQAFGVFLPIKSVGVVGDQRRYEYVIALRAVVSIDFMTATWANLPYDFLSLVSNRIVNEVKQVSRVVYDVTGKPPGTIEWE.

In terms of domain architecture, Glutamine amidotransferase type-1 spans 8 to 198; the sequence is KILILDFGSQ…VVNICGCDTL (191 aa). Cys-84 acts as the Nucleophile in catalysis. Catalysis depends on residues His-172 and Glu-174. Residues 199–391 form the GMPS ATP-PPase domain; it reads WNIENIIEND…LGLPYNMLYR (193 aa). ATP is bound at residue 226 to 232; the sequence is SGGVDSS.

In terms of assembly, homodimer.

It carries out the reaction XMP + L-glutamine + ATP + H2O = GMP + L-glutamate + AMP + diphosphate + 2 H(+). It participates in purine metabolism; GMP biosynthesis; GMP from XMP (L-Gln route): step 1/1. Catalyzes the synthesis of GMP from XMP. The chain is GMP synthase [glutamine-hydrolyzing] from Francisella tularensis subsp. holarctica (strain FTNF002-00 / FTA).